Consider the following 1488-residue polypeptide: Chromosome partition protein MukB (1488 aa).

34–41 (GGNGAGKS) serves as a coordination point for ATP. Coiled-coil stretches lie at residues 326-418 (LEAD…QYNQ), 444-472 (LDTF…QTAH), and 509-602 (RHLA…QRAP). Positions 666-783 (PGGAEDQRLN…SLPIFGRAAR (118 aa)) are flexible hinge. 3 coiled-coil regions span residues 835 to 923 (EAEI…AKLE), 977 to 1116 (EMLS…AKAG), and 1209 to 1265 (VEAI…LQSV). Residues 1049–1074 (ADSGAEERARQRRDELHAQLSNNRSR) form a disordered region. Residues 1051–1065 (SGAEERARQRRDELH) show a composition bias toward basic and acidic residues.

Belongs to the SMC family. MukB subfamily. In terms of assembly, homodimerization via its hinge domain. Binds to DNA via its C-terminal region. Interacts, and probably forms a ternary complex, with MukE and MukF via its C-terminal region. The complex formation is stimulated by calcium or magnesium. Interacts with tubulin-related protein FtsZ.

The protein localises to the cytoplasm. It is found in the nucleoid. Its function is as follows. Plays a central role in chromosome condensation, segregation and cell cycle progression. Functions as a homodimer, which is essential for chromosome partition. Involved in negative DNA supercoiling in vivo, and by this means organize and compact chromosomes. May achieve or facilitate chromosome segregation by condensation DNA from both sides of a centrally located replisome during cell division. The sequence is that of Chromosome partition protein MukB from Salmonella enteritidis PT4 (strain P125109).